We begin with the raw amino-acid sequence, 214 residues long: Nascent polypeptide-associated complex subunit alpha (214 aa).

The segment at 1–80 (MPGEATETVP…SEKKARKAMS (80 aa)) is disordered. A compositionally biased stretch (acidic residues) spans 29-40 (SDSDDSPPELEQ). Over residues 41–56 (DSTQTTTQQAQLAAAA) the composition is skewed to low complexity. Positions 69-134 (SRSEKKARKA…AKIEDLSQQA (66 aa)) constitute an NAC-A/B domain. The 38-residue stretch at 175–212 (VEVKDIELVMSQANVSRAKAVRALKNNSNDIVNAIMEL) folds into the UBA domain.

Belongs to the NAC-alpha family.

In terms of biological role, may promote appropriate targeting of ribosome-nascent polypeptide complexes. The sequence is that of Nascent polypeptide-associated complex subunit alpha (naca) from Xenopus tropicalis (Western clawed frog).